The primary structure comprises 68 residues: Protein SlyX homolog (68 aa).

The protein belongs to the SlyX family.

The sequence is that of Protein SlyX homolog from Pseudomonas fluorescens (strain SBW25).